The chain runs to 203 residues: Snake venom metalloproteinase atroxase (203 aa).

A Pyrrolidone carboxylic acid (Glu) modification is found at E1. N5 carries an N-linked (GlcNAc...) asparagine glycan. Positions 9–203 (RYIELVVVAD…KQYNPQIXNK (195 aa)) constitute a Peptidase M12B domain. The Ca(2+) site is built by E12 and D96. Residue H145 participates in Zn(2+) binding. The active site involves E146. The Zn(2+) site is built by H149 and H155. C160 and C167 are joined by a disulfide. N202 provides a ligand contact to Ca(2+).

This sequence belongs to the venom metalloproteinase (M12B) family. P-I subfamily. As to quaternary structure, monomer. Zn(2+) is required as a cofactor. In terms of processing, the N-terminus is blocked. In terms of tissue distribution, expressed by the venom gland.

It localises to the secreted. It carries out the reaction Cleavage of 5-His-|-Leu-6, 9-Ser-|-His-10, 10-His-|-Leu-11, 14-Ala-|-Leu-15 and 16-Tyr-|-Leu-17 in insulin B chain.. With respect to regulation, inhibited by EDTA and alpha2-macroglobulin. In terms of biological role, snake venom zinc metalloprotease that has Aalpha, Bbeta fibrin(ogen)olytic activities. It cleaves the Aalpha chain of fibrinogen first followed by the Bbeta chain and shows no effect on the gamma chain. Does not induce or inhibit platelet aggregation, and is unable to activate plasminogen. Exhibits low lethality when tested on mice. Intravenous administration results in thrombolysis within one hour followed by recanalization. Fibrinogenolytic activity results in a 60% decrease in the rat's plasma fibrinogen level. Histological examination of kidney, liver, heart and lung tissue shows no necrosis nor hemorrhage. The polypeptide is Snake venom metalloproteinase atroxase (Crotalus atrox (Western diamondback rattlesnake)).